We begin with the raw amino-acid sequence, 502 residues long: Glycerol kinase (502 aa).

ADP is bound at residue T14. 3 residues coordinate ATP: T14, T15, and S16. Sn-glycerol 3-phosphate is bound at residue T14. ADP is bound at residue R18. Residues R84, E85, Y136, and D246 each contribute to the sn-glycerol 3-phosphate site. 5 residues coordinate glycerol: R84, E85, Y136, D246, and Q247. Residues T268 and G311 each contribute to the ADP site. Residues T268, G311, Q315, and G412 each contribute to the ATP site. The ADP site is built by G412 and N416.

It belongs to the FGGY kinase family. As to quaternary structure, homotetramer and homodimer (in equilibrium). Heterodimer with EIIA-Glc. Binds 1 zinc ion per glycerol kinase EIIA-Glc dimer. The zinc ion is important for dimerization.

It carries out the reaction glycerol + ATP = sn-glycerol 3-phosphate + ADP + H(+). It participates in polyol metabolism; glycerol degradation via glycerol kinase pathway; sn-glycerol 3-phosphate from glycerol: step 1/1. Its activity is regulated as follows. Activity of this regulatory enzyme is affected by several metabolites. Allosterically and non-competitively inhibited by fructose 1,6-bisphosphate (FBP) and unphosphorylated phosphocarrier protein EIIA-Glc (III-Glc), an integral component of the bacterial phosphotransferase (PTS) system. Its function is as follows. Key enzyme in the regulation of glycerol uptake and metabolism. Catalyzes the phosphorylation of glycerol to yield sn-glycerol 3-phosphate. In Salmonella typhimurium (strain LT2 / SGSC1412 / ATCC 700720), this protein is Glycerol kinase.